Reading from the N-terminus, the 468-residue chain is UDP-N-acetylmuramoyl-L-alanine--L-glutamate ligase (468 aa).

ATP is bound at residue 122–128 (GTKGKST).

The protein belongs to the MurCDEF family. MurD2 subfamily.

It is found in the cytoplasm. It catalyses the reaction UDP-N-acetyl-alpha-D-muramoyl-L-alanine + L-glutamate + ATP = UDP-N-acetyl-alpha-D-muramoyl-L-alanyl-L-glutamate + ADP + phosphate + H(+). Its pathway is cell wall biogenesis; peptidoglycan biosynthesis. In terms of biological role, cell wall formation. Catalyzes the addition of L-glutamate to the nucleotide precursor UDP-N-acetylmuramoyl-L-alanine. The polypeptide is UDP-N-acetylmuramoyl-L-alanine--L-glutamate ligase (Xylella fastidiosa (strain 9a5c)).